Reading from the N-terminus, the 361-residue chain is UDP-N-acetylglucosamine--N-acetylmuramyl-(pentapeptide) pyrophosphoryl-undecaprenol N-acetylglucosamine transferase (361 aa).

UDP-N-acetyl-alpha-D-glucosamine is bound by residues 12–14, Asn126, Arg167, Ser192, Ile247, and Gln292; that span reads TGG.

This sequence belongs to the glycosyltransferase 28 family. MurG subfamily.

The protein resides in the cell inner membrane. It carries out the reaction di-trans,octa-cis-undecaprenyl diphospho-N-acetyl-alpha-D-muramoyl-L-alanyl-D-glutamyl-meso-2,6-diaminopimeloyl-D-alanyl-D-alanine + UDP-N-acetyl-alpha-D-glucosamine = di-trans,octa-cis-undecaprenyl diphospho-[N-acetyl-alpha-D-glucosaminyl-(1-&gt;4)]-N-acetyl-alpha-D-muramoyl-L-alanyl-D-glutamyl-meso-2,6-diaminopimeloyl-D-alanyl-D-alanine + UDP + H(+). The protein operates within cell wall biogenesis; peptidoglycan biosynthesis. Its function is as follows. Cell wall formation. Catalyzes the transfer of a GlcNAc subunit on undecaprenyl-pyrophosphoryl-MurNAc-pentapeptide (lipid intermediate I) to form undecaprenyl-pyrophosphoryl-MurNAc-(pentapeptide)GlcNAc (lipid intermediate II). The polypeptide is UDP-N-acetylglucosamine--N-acetylmuramyl-(pentapeptide) pyrophosphoryl-undecaprenol N-acetylglucosamine transferase (Syntrophus aciditrophicus (strain SB)).